The following is a 173-amino-acid chain: Translation initiation factor IF-3 (173 aa).

The protein belongs to the IF-3 family. As to quaternary structure, monomer.

The protein localises to the cytoplasm. In terms of biological role, IF-3 binds to the 30S ribosomal subunit and shifts the equilibrium between 70S ribosomes and their 50S and 30S subunits in favor of the free subunits, thus enhancing the availability of 30S subunits on which protein synthesis initiation begins. The protein is Translation initiation factor IF-3 of Phenylobacterium zucineum (strain HLK1).